The chain runs to 134 residues: Methylglyoxal synthase (134 aa).

The MGS-like domain occupies 1–134 (MNIALIAHDN…DWRERVKERG (134 aa)). Residues H8, K12, 34 to 37 (TGTT), and 54 to 55 (SG) contribute to the substrate site. The Proton donor/acceptor role is filled by D60. Substrate is bound at residue H87.

Belongs to the methylglyoxal synthase family.

The enzyme catalyses dihydroxyacetone phosphate = methylglyoxal + phosphate. In terms of biological role, catalyzes the formation of methylglyoxal from dihydroxyacetone phosphate. The sequence is that of Methylglyoxal synthase from Alkaliphilus metalliredigens (strain QYMF).